The following is a 103-amino-acid chain: Large ribosomal subunit protein uL24 (103 aa).

The protein belongs to the universal ribosomal protein uL24 family. Part of the 50S ribosomal subunit.

One of two assembly initiator proteins, it binds directly to the 5'-end of the 23S rRNA, where it nucleates assembly of the 50S subunit. In terms of biological role, one of the proteins that surrounds the polypeptide exit tunnel on the outside of the subunit. In Oceanobacillus iheyensis (strain DSM 14371 / CIP 107618 / JCM 11309 / KCTC 3954 / HTE831), this protein is Large ribosomal subunit protein uL24.